Here is a 359-residue protein sequence, read N- to C-terminus: Probable D-xylulose reductase A (359 aa).

Zn(2+) is bound by residues C47, H72, and E73. 182–187 (GAGPVG) serves as a coordination point for NAD(+).

It belongs to the zinc-containing alcohol dehydrogenase family. Zn(2+) serves as cofactor.

It carries out the reaction xylitol + NAD(+) = D-xylulose + NADH + H(+). Its pathway is carbohydrate degradation; L-arabinose degradation via L-arabinitol; D-xylulose 5-phosphate from L-arabinose (fungal route): step 4/5. Functionally, xylitol dehydrogenase which catalyzes the conversion of xylitol to D-xylulose. Xylose is a major component of hemicelluloses such as xylan. Most fungi utilize D-xylose via three enzymatic reactions, xylose reductase (XR), xylitol dehydrogenase (XDH), and xylulokinase, to form xylulose 5-phosphate, which enters pentose phosphate pathway. The chain is Probable D-xylulose reductase A (xdhA) from Emericella nidulans (strain FGSC A4 / ATCC 38163 / CBS 112.46 / NRRL 194 / M139) (Aspergillus nidulans).